Reading from the N-terminus, the 202-residue chain is Polyamine-modulated factor 1 (202 aa).

Residues 1 to 15 show a composition bias toward basic and acidic residues; sequence MAEVSRDSEAAERGP. Positions 1–26 are disordered; it reads MAEVSRDSEAAERGPEGSSPEAVPGD. The stretch at 153 to 194 forms a coiled coil; the sequence is EAKNQELADAVLAGRRQVEELQQQVRALQQTWQALHREQREL.

Component of the MIS12 complex composed of MIS12, DSN1, NSL1 and PMF1. Interacts with COPS7A. Interacts via its coiled-coil domain with the leucine-zipper domain of NFE2L2. The interaction with NFE2L2 is required for the transcriptional regulation of SSAT.

Its subcellular location is the nucleus. The protein localises to the chromosome. It localises to the centromere. It is found in the kinetochore. Functionally, part of the MIS12 complex which is required for normal chromosome alignment and segregation and for kinetochore formation during mitosis. May act as a cotranscription partner of NFE2L2 involved in regulation of polyamine-induced transcription of SSAT. The sequence is that of Polyamine-modulated factor 1 from Mus musculus (Mouse).